A 463-amino-acid chain; its full sequence is Ribulose bisphosphate carboxylase large chain (463 aa).

K5 is subject to N6,N6,N6-trimethyllysine. Positions 114 and 164 each coordinate substrate. K166 acts as the Proton acceptor in catalysis. K168 contributes to the substrate binding site. The Mg(2+) site is built by K192, D194, and E195. K192 bears the N6-carboxylysine mark. The active-site Proton acceptor is the H285. Residues R286, H318, and S370 each coordinate substrate.

This sequence belongs to the RuBisCO large chain family. Type I subfamily. As to quaternary structure, heterohexadecamer of 8 large chains and 8 small chains; disulfide-linked. The disulfide link is formed within the large subunit homodimers. Requires Mg(2+) as cofactor. In terms of processing, the disulfide bond which can form in the large chain dimeric partners within the hexadecamer appears to be associated with oxidative stress and protein turnover.

It localises to the plastid. It is found in the chloroplast. It carries out the reaction 2 (2R)-3-phosphoglycerate + 2 H(+) = D-ribulose 1,5-bisphosphate + CO2 + H2O. The enzyme catalyses D-ribulose 1,5-bisphosphate + O2 = 2-phosphoglycolate + (2R)-3-phosphoglycerate + 2 H(+). Functionally, ruBisCO catalyzes two reactions: the carboxylation of D-ribulose 1,5-bisphosphate, the primary event in carbon dioxide fixation, as well as the oxidative fragmentation of the pentose substrate in the photorespiration process. Both reactions occur simultaneously and in competition at the same active site. The protein is Ribulose bisphosphate carboxylase large chain of Pelargonium grandiflorum (Geranium).